The primary structure comprises 52 residues: Large ribosomal subunit protein bL33 (52 aa).

Belongs to the bacterial ribosomal protein bL33 family.

In Chlamydia trachomatis serovar A (strain ATCC VR-571B / DSM 19440 / HAR-13), this protein is Large ribosomal subunit protein bL33.